A 457-amino-acid polypeptide reads, in one-letter code: Siroheme synthase (457 aa).

Residues 1–204 (MDHLPIFCQL…NDQKAITETT (204 aa)) are precorrin-2 dehydrogenase /sirohydrochlorin ferrochelatase. NAD(+) is bound by residues 22-23 (DV) and 43-44 (LA). S128 bears the Phosphoserine mark. The interval 216-457 (GEVVLVGAGP…RDKLNWFSNH (242 aa)) is uroporphyrinogen-III C-methyltransferase. P225 provides a ligand contact to S-adenosyl-L-methionine. D248 acts as the Proton acceptor in catalysis. Residue K270 is the Proton donor of the active site. S-adenosyl-L-methionine contacts are provided by residues 301-303 (GGD), I306, 331-332 (TA), M382, and G411.

This sequence in the N-terminal section; belongs to the precorrin-2 dehydrogenase / sirohydrochlorin ferrochelatase family. The protein in the C-terminal section; belongs to the precorrin methyltransferase family.

It catalyses the reaction uroporphyrinogen III + 2 S-adenosyl-L-methionine = precorrin-2 + 2 S-adenosyl-L-homocysteine + H(+). The catalysed reaction is precorrin-2 + NAD(+) = sirohydrochlorin + NADH + 2 H(+). It carries out the reaction siroheme + 2 H(+) = sirohydrochlorin + Fe(2+). The protein operates within cofactor biosynthesis; adenosylcobalamin biosynthesis; precorrin-2 from uroporphyrinogen III: step 1/1. It functions in the pathway cofactor biosynthesis; adenosylcobalamin biosynthesis; sirohydrochlorin from precorrin-2: step 1/1. It participates in porphyrin-containing compound metabolism; siroheme biosynthesis; precorrin-2 from uroporphyrinogen III: step 1/1. Its pathway is porphyrin-containing compound metabolism; siroheme biosynthesis; siroheme from sirohydrochlorin: step 1/1. The protein operates within porphyrin-containing compound metabolism; siroheme biosynthesis; sirohydrochlorin from precorrin-2: step 1/1. Functionally, multifunctional enzyme that catalyzes the SAM-dependent methylations of uroporphyrinogen III at position C-2 and C-7 to form precorrin-2 via precorrin-1. Then it catalyzes the NAD-dependent ring dehydrogenation of precorrin-2 to yield sirohydrochlorin. Finally, it catalyzes the ferrochelation of sirohydrochlorin to yield siroheme. This Escherichia fergusonii (strain ATCC 35469 / DSM 13698 / CCUG 18766 / IAM 14443 / JCM 21226 / LMG 7866 / NBRC 102419 / NCTC 12128 / CDC 0568-73) protein is Siroheme synthase.